A 220-amino-acid chain; its full sequence is Riboflavin kinase (220 aa).

The segment at 1–92 (METDDQYYRA…LSRILAIKNN (92 aa)) is H-T-H motif-like. The interval 93-220 (VVITGTVTSG…GDRVSVEVYT (128 aa)) is riboflavin kinase. Residue 102–107 (GMGEGR) participates in CDP binding. Residues Thr131 and Asn133 each contribute to the Mg(2+) site. The FMN site is built by Thr188 and Glu195. 200–203 (KYLR) serves as a coordination point for CDP.

Belongs to the archaeal riboflavin kinase family. Mg(2+) serves as cofactor.

The catalysed reaction is riboflavin + CTP = CDP + FMN + H(+). Its pathway is cofactor biosynthesis; FMN biosynthesis; FMN from riboflavin (CTP route): step 1/1. Catalyzes the CTP-dependent phosphorylation of riboflavin (vitamin B2) to form flavin mononucleotide (FMN). This chain is Riboflavin kinase (ribK), found in Thermoplasma acidophilum (strain ATCC 25905 / DSM 1728 / JCM 9062 / NBRC 15155 / AMRC-C165).